The following is a 143-amino-acid chain: Large ribosomal subunit protein uL11 (143 aa).

The protein belongs to the universal ribosomal protein uL11 family. In terms of assembly, part of the ribosomal stalk of the 50S ribosomal subunit. Interacts with L10 and the large rRNA to form the base of the stalk. L10 forms an elongated spine to which L12 dimers bind in a sequential fashion forming a multimeric L10(L12)X complex. Post-translationally, one or more lysine residues are methylated.

Functionally, forms part of the ribosomal stalk which helps the ribosome interact with GTP-bound translation factors. The protein is Large ribosomal subunit protein uL11 of Polynucleobacter asymbioticus (strain DSM 18221 / CIP 109841 / QLW-P1DMWA-1) (Polynucleobacter necessarius subsp. asymbioticus).